We begin with the raw amino-acid sequence, 777 residues long: 1,4-alpha-glucan branching enzyme GlgB (777 aa).

The active-site Nucleophile is the D408. E461 serves as the catalytic Proton donor.

It belongs to the glycosyl hydrolase 13 family. GlgB subfamily. Monomer.

The enzyme catalyses Transfers a segment of a (1-&gt;4)-alpha-D-glucan chain to a primary hydroxy group in a similar glucan chain.. The protein operates within glycan biosynthesis; glycogen biosynthesis. Its function is as follows. Catalyzes the formation of the alpha-1,6-glucosidic linkages in glycogen by scission of a 1,4-alpha-linked oligosaccharide from growing alpha-1,4-glucan chains and the subsequent attachment of the oligosaccharide to the alpha-1,6 position. In Actinobacillus pleuropneumoniae serotype 7 (strain AP76), this protein is 1,4-alpha-glucan branching enzyme GlgB.